Here is a 243-residue protein sequence, read N- to C-terminus: Uridylate kinase (243 aa).

Residue 18–21 (KLGG) coordinates ATP. Gly59 serves as a coordination point for UMP. ATP-binding residues include Gly60 and Arg64. Residues Asp79 and 140 to 147 (MGMPYFST) each bind UMP. The ATP site is built by Tyr173 and Asp176.

It belongs to the UMP kinase family. Homohexamer.

The protein resides in the cytoplasm. It catalyses the reaction UMP + ATP = UDP + ADP. Its pathway is pyrimidine metabolism; CTP biosynthesis via de novo pathway; UDP from UMP (UMPK route): step 1/1. With respect to regulation, inhibited by UTP. Catalyzes the reversible phosphorylation of UMP to UDP. This is Uridylate kinase from Corynebacterium efficiens (strain DSM 44549 / YS-314 / AJ 12310 / JCM 11189 / NBRC 100395).